Consider the following 123-residue polypeptide: UPF0231 protein PMI2039 (123 aa).

It belongs to the UPF0231 family.

This is UPF0231 protein PMI2039 from Proteus mirabilis (strain HI4320).